A 79-amino-acid polypeptide reads, in one-letter code: Anti-insect Ac4 (79 aa).

The first 17 residues, 1 to 17 (MISLSLLLMIGVESVRD), serve as a signal peptide directing secretion. The region spanning 18-77 (GYIVDFKNCVYRCVPPCDGLCKKNGGKGGSCSFLIGSGLACWCNALPDNVPIKDPLHKCP) is the LCN-type CS-alpha/beta domain. 4 disulfides stabilise this stretch: Cys26–Cys76, Cys30–Cys48, Cys34–Cys58, and Cys38–Cys60.

Belongs to the long (4 C-C) scorpion toxin superfamily. Sodium channel inhibitor family. Alpha subfamily. As to expression, expressed by the venom gland.

Its subcellular location is the secreted. Functionally, alpha toxins bind voltage-independently at site-3 of sodium channels (Nav) and inhibit the inactivation of the activated channels, thereby blocking neuronal transmission. This protein is weakly toxic against insects (ED(50)&gt;2 ug per 100 mg of blowfly larvae), but is inactive against mammalian sodium channels (rNav1.2a, and rNav1.4). The protein is Anti-insect Ac4 of Androctonus crassicauda (Arabian fat-tailed scorpion).